Consider the following 130-residue polypeptide: Small ribosomal subunit protein uS8 (130 aa).

This sequence belongs to the universal ribosomal protein uS8 family. As to quaternary structure, part of the 30S ribosomal subunit. Contacts proteins S5 and S12.

Functionally, one of the primary rRNA binding proteins, it binds directly to 16S rRNA central domain where it helps coordinate assembly of the platform of the 30S subunit. The sequence is that of Small ribosomal subunit protein uS8 from Edwardsiella ictaluri (strain 93-146).